Consider the following 208-residue polypeptide: Uracil phosphoribosyltransferase (208 aa).

5-phospho-alpha-D-ribose 1-diphosphate contacts are provided by residues Arg78, Arg103, and Asp130 to Ser138. Uracil-binding positions include Ile193 and Gly198–Ala200. Asp199 is a 5-phospho-alpha-D-ribose 1-diphosphate binding site.

This sequence belongs to the UPRTase family. Mg(2+) serves as cofactor.

The catalysed reaction is UMP + diphosphate = 5-phospho-alpha-D-ribose 1-diphosphate + uracil. Its pathway is pyrimidine metabolism; UMP biosynthesis via salvage pathway; UMP from uracil: step 1/1. With respect to regulation, allosterically activated by GTP. Catalyzes the conversion of uracil and 5-phospho-alpha-D-ribose 1-diphosphate (PRPP) to UMP and diphosphate. The sequence is that of Uracil phosphoribosyltransferase from Escherichia coli O139:H28 (strain E24377A / ETEC).